Here is a 325-residue protein sequence, read N- to C-terminus: TNFAIP3-interacting protein 3 (325 aa).

Disordered regions lie at residues 1–30 (MAHF…STRK) and 84–129 (RFLS…RLNE). The segment covering 17-28 (STEHKECAEPST) has biased composition (basic and acidic residues). The stretch at 27–265 (STRKNLMNSL…LEKQLKQMYC (239 aa)) forms a coiled coil. Residues 190-248 (HEEMRTEMEVLKQQVQIYEEDFKKERSDRERLNQEKEELQQINETSQSQLNRLNSQIKA) are ubiquitin-binding domain (UBD).

As to quaternary structure, interacts with TNFAIP3. Interacts with polyubiquitin. Highly expressed in lung, lymph node, thymus and fetal liver. Expressed at lower levels in bone marrow, brain, kidney, spleen, leukocytes and tonsils. Could be detected in heart, salivary gland, adrenal gland, pancreas, ovary and fetal brain. High levels detected in liver, colon, small intestine, muscle, stomach, testis, placenta, thyroid, uterus, prostate, skin and PBL.

In terms of biological role, binds to zinc finger protein TNFAIP3 and inhibits NF-kappa-B activation induced by tumor necrosis factor, Toll-like receptor 4 (TLR4), interleukin-1 and 12-O-tetradecanoylphorbol-13-acetate. Overexpression inhibits NF-kappa-B-dependent gene expression in response to lipopolysaccharide at a level downstream of TRAF6 and upstream of IKBKB. NF-kappa-B inhibition is independent of TNFAIP3 binding. This Homo sapiens (Human) protein is TNFAIP3-interacting protein 3.